The sequence spans 1098 residues: Transcription elongation regulator 1 (1098 aa).

Positions 1 to 15 (MAERGGDGGESERFN) are enriched in basic and acidic residues. A disordered region spans residues 1–105 (MAERGGDGGE…RPPFMPPPMS (105 aa)). Ser11 is subject to Phosphoserine. Arg20 bears the Omega-N-methylarginine mark. 4 positions are modified to asymmetric dimethylarginine: Arg28, Arg30, Arg41, and Arg48. Residues 32 to 105 (PAPPPNAVMR…RPPFMPPPMS (74 aa)) show a composition bias toward pro residues. The WW 1 domain occupies 131–164 (PPTEEIWVENKTPDGKVYYYNARTRESAWTKPDG). Positions 184–244 (QAQAQAQAQA…AQAQAQAQVQ (61 aa)) form a coiled coil. Residues 259–333 (STPTTSSPAP…PTATPVQTVP (75 aa)) show a composition bias toward low complexity. A disordered region spans residues 259 to 348 (STPTTSSPAP…TLPPAVPHSV (90 aa)). A compositionally biased stretch (pro residues) spans 334–344 (QPHPQTLPPAV). Residues 429-462 (ATAVSEWTEYKTADGKTYYYNNRTLESTWEKPQE) form the WW 2 domain. 2 stretches are compositionally biased toward basic and acidic residues: residues 469–481 (LEEKIKEPIKEPS) and 496–506 (EEPIKEIKEEP). A disordered region spans residues 469 to 526 (LEEKIKEPIKEPSEEPLPMETEEEDPKEEPIKEIKEEPKEEEMTEEEKAAQKAKPVAT). Residues Lys503 and Lys507 each participate in a glycyl lysine isopeptide (Lys-Gly) (interchain with G-Cter in SUMO2) cross-link. Residues 528–561 (PIPGTPWCVVWTGDERVFFYNPTTRLSMWDRPDD) form the WW 3 domain. Residues 606–655 (AIKEEQELMEEINEDEPVKAKKRKRDDNKDIDSEKEAAMEAEIKAARERA) adopt a coiled-coil conformation. Lys608 is covalently cross-linked (Glycyl lysine isopeptide (Lys-Gly) (interchain with G-Cter in SUMO2)). A disordered region spans residues 615–640 (EEINEDEPVKAKKRKRDDNKDIDSEK). The Nuclear localization signal signature appears at 626 to 630 (KKRKR). Over residues 630–640 (RDDNKDIDSEK) the composition is skewed to basic and acidic residues. Ser638 carries the post-translational modification Phosphoserine. 3 consecutive FF domains span residues 659 to 712 (LEAR…YVKT), 725 to 779 (IMQA…FVAA), and 791 to 846 (RGEK…YIEK). Ser834 carries the post-translational modification Phosphoserine. A coiled-coil region spans residues 844 to 906 (IEKIAKNLDS…EEAIQNFKAL (63 aa)). Positions 870–895 (REREREVQKARSEQTKEIDREREQHK) are disordered. 3 consecutive FF domains span residues 896–952 (REEA…HIEA), 954–1010 (TKKK…YIRD), and 1012–1077 (YITA…YVDD). A Phosphoserine modification is found at Ser933. A disordered region spans residues 1076–1098 (DDLDRRGPPPPPTASEPTRRSTK).

As to quaternary structure, binds formin. Interacts (via the second WW domain) with TREX1 (via proline-rich region). Binds RNA polymerase II, HD and SF1. Detected in brain neurons.

It is found in the nucleus. Functionally, transcription factor that binds RNA polymerase II and inhibits the elongation of transcripts from target promoters. Regulates transcription elongation in a TATA box-dependent manner. Necessary for TAT-dependent activation of the human immunodeficiency virus type 1 (HIV-1) promoter. The sequence is that of Transcription elongation regulator 1 (TCERG1) from Homo sapiens (Human).